A 120-amino-acid chain; its full sequence is NAD(P)H-quinone oxidoreductase subunit 3 (120 aa).

3 consecutive transmembrane segments (helical) span residues 10 to 30 (FLGFLLIAAAVPILALVTNLI), 64 to 84 (MFALVFVIFDVETVFLYPWAV), and 89 to 109 (LGLLAFIEALIFIAILVIALA).

It belongs to the complex I subunit 3 family. In terms of assembly, NDH-1 can be composed of about 15 different subunits; different subcomplexes with different compositions have been identified which probably have different functions.

It localises to the cellular thylakoid membrane. It catalyses the reaction a plastoquinone + NADH + (n+1) H(+)(in) = a plastoquinol + NAD(+) + n H(+)(out). The catalysed reaction is a plastoquinone + NADPH + (n+1) H(+)(in) = a plastoquinol + NADP(+) + n H(+)(out). Functionally, NDH-1 shuttles electrons from an unknown electron donor, via FMN and iron-sulfur (Fe-S) centers, to quinones in the respiratory and/or the photosynthetic chain. The immediate electron acceptor for the enzyme in this species is believed to be plastoquinone. Couples the redox reaction to proton translocation, and thus conserves the redox energy in a proton gradient. Cyanobacterial NDH-1 also plays a role in inorganic carbon-concentration. This Prochlorococcus marinus (strain MIT 9215) protein is NAD(P)H-quinone oxidoreductase subunit 3.